Consider the following 73-residue polypeptide: Ubiquitin-like modifier HUB1 (73 aa).

Positions 1-73 (MIEVVVNDRL…DQTNLELYYL (73 aa)) constitute a Ubiquitin-like domain.

Forms conjugate with SPH1 and HBT1. Involved in morphogenesis. This Saccharomyces cerevisiae (strain ATCC 204508 / S288c) (Baker's yeast) protein is Ubiquitin-like modifier HUB1 (HUB1).